A 145-amino-acid polypeptide reads, in one-letter code: SsrA-binding protein (145 aa).

Belongs to the SmpB family.

The protein localises to the cytoplasm. Required for rescue of stalled ribosomes mediated by trans-translation. Binds to transfer-messenger RNA (tmRNA), required for stable association of tmRNA with ribosomes. tmRNA and SmpB together mimic tRNA shape, replacing the anticodon stem-loop with SmpB. tmRNA is encoded by the ssrA gene; the 2 termini fold to resemble tRNA(Ala) and it encodes a 'tag peptide', a short internal open reading frame. During trans-translation Ala-aminoacylated tmRNA acts like a tRNA, entering the A-site of stalled ribosomes, displacing the stalled mRNA. The ribosome then switches to translate the ORF on the tmRNA; the nascent peptide is terminated with the 'tag peptide' encoded by the tmRNA and targeted for degradation. The ribosome is freed to recommence translation, which seems to be the essential function of trans-translation. The chain is SsrA-binding protein from Mycoplasma genitalium (strain ATCC 33530 / DSM 19775 / NCTC 10195 / G37) (Mycoplasmoides genitalium).